Consider the following 326-residue polypeptide: Phospho-N-acetylmuramoyl-pentapeptide-transferase (326 aa).

Helical transmembrane passes span 3–23 (ISIS…PAFI), 51–71 (TMGG…VALF), 79–99 (VGMI…DDFL), 115–135 (LALQ…GGDM), 138–158 (VFGY…FWLV), 169–189 (GIDG…GVIA), 195–215 (MDIL…FVFN), 221–243 (VFMG…MALH), and 306–326 (FFFW…LYLM).

The protein belongs to the glycosyltransferase 4 family. MraY subfamily. The cofactor is Mg(2+).

It localises to the cell membrane. It catalyses the reaction UDP-N-acetyl-alpha-D-muramoyl-L-alanyl-gamma-D-glutamyl-L-lysyl-D-alanyl-D-alanine + di-trans,octa-cis-undecaprenyl phosphate = Mur2Ac(oyl-L-Ala-gamma-D-Glu-L-Lys-D-Ala-D-Ala)-di-trans,octa-cis-undecaprenyl diphosphate + UMP. It functions in the pathway cell wall biogenesis; peptidoglycan biosynthesis. Its function is as follows. Catalyzes the initial step of the lipid cycle reactions in the biosynthesis of the cell wall peptidoglycan: transfers peptidoglycan precursor phospho-MurNAc-pentapeptide from UDP-MurNAc-pentapeptide onto the lipid carrier undecaprenyl phosphate, yielding undecaprenyl-pyrophosphoryl-MurNAc-pentapeptide, known as lipid I. This is Phospho-N-acetylmuramoyl-pentapeptide-transferase from Streptococcus pneumoniae (strain Taiwan19F-14).